Here is a 502-residue protein sequence, read N- to C-terminus: ATP synthase subunit alpha (502 aa).

Position 169–176 (169–176) interacts with ATP; sequence GDRQTGKT.

Belongs to the ATPase alpha/beta chains family. In terms of assembly, F-type ATPases have 2 components, CF(1) - the catalytic core - and CF(0) - the membrane proton channel. CF(1) has five subunits: alpha(3), beta(3), gamma(1), delta(1), epsilon(1). CF(0) has three main subunits: a(1), b(2) and c(9-12). The alpha and beta chains form an alternating ring which encloses part of the gamma chain. CF(1) is attached to CF(0) by a central stalk formed by the gamma and epsilon chains, while a peripheral stalk is formed by the delta and b chains. The F(1)F(0) complex interacts with SpoIIIJ and YqjG; YqgA is found in the same complex.

Its subcellular location is the cell membrane. It is found in the membrane raft. It catalyses the reaction ATP + H2O + 4 H(+)(in) = ADP + phosphate + 5 H(+)(out). Its function is as follows. Produces ATP from ADP in the presence of a proton gradient across the membrane. The alpha chain is a regulatory subunit. The sequence is that of ATP synthase subunit alpha from Bacillus subtilis (strain 168).